A 463-amino-acid chain; its full sequence is Competence protein ComFA (463 aa).

Residues C60, C63, C84, and C87 each contribute to the Zn(2+) site. A Helicase ATP-binding domain is found at 133–285; the sequence is IEAISKKEEL…LNGQLHSVRI (153 aa). Residue 146 to 153 participates in ATP binding; the sequence is AVCGAGKT. Positions 233-236 match the DEAD box motif; it reads DEVD. Residues 317–463 enclose the Helicase C-terminal domain; the sequence is AVKRWIEFHV…ELAAKVECTD (147 aa).

Belongs to the DEAD box helicase family. In terms of assembly, monomer and dimer in solution. Interacts with DprA and ComFC; ComFA-ComFC form rings about 150 Angstroms in diameter with apparent 6-fold symmetry. Zn(2+) is required as a cofactor.

The protein resides in the cytoplasm. Functionally, involved in transformation (genetic competence for DNA uptake). Required for DNA uptake but not for DNA binding to cells. DNA uptake is energy dependent, this protein may provide the driving force for DNA uptake. Does not have helicase activity, translocates on single-stranded (ss)DNA in a 5'-3' direction in an ATP-dependent manner, but does not unwind double-stranded (ds)DNA. ATP hydrolysis causes the release of ssDNA from ComFA. A ssDNA-stimulated ATPase; dsDNA does not stimulate ATPase. ATP hydrolysis causes the release of ssDNA from ComFA. Binds ssDNA but only very poorly to dsDNA in the absence of ATP. Binding to ssDNA does not require free DNA ends. The sequence is that of Competence protein ComFA from Bacillus subtilis (strain 168).